The sequence spans 55 residues: Large ribosomal subunit protein bL33B (55 aa).

It belongs to the bacterial ribosomal protein bL33 family.

This Salinispora tropica (strain ATCC BAA-916 / DSM 44818 / JCM 13857 / NBRC 105044 / CNB-440) protein is Large ribosomal subunit protein bL33B.